The sequence spans 381 residues: N-acetylglucosamine-6-phosphate deacetylase (381 aa).

Glu-129 is an a divalent metal cation binding site. 140 to 141 is a binding site for substrate; the sequence is VH. His-193 and His-214 together coordinate a divalent metal cation. Residues 217–218, Arg-226, and 246–249 contribute to the substrate site; these read NA and DGVH. Catalysis depends on Asp-271, which acts as the Proton donor/acceptor. 306–308 is a binding site for substrate; the sequence is IAG.

Belongs to the metallo-dependent hydrolases superfamily. NagA family. As to quaternary structure, homotetramer. The cofactor is a divalent metal cation.

It catalyses the reaction N-acetyl-D-glucosamine 6-phosphate + H2O = D-glucosamine 6-phosphate + acetate. The protein operates within amino-sugar metabolism; N-acetylneuraminate degradation; D-fructose 6-phosphate from N-acetylneuraminate: step 4/5. Involved in the first committed step in the biosynthesis of amino-sugar-nucleotides. Catalyzes the hydrolysis of the N-acetyl group of N-acetylglucosamine-6-phosphate (GlcNAc-6-P) to yield glucosamine 6-phosphate and acetate. The chain is N-acetylglucosamine-6-phosphate deacetylase (nagA) from Haemophilus influenzae (strain ATCC 51907 / DSM 11121 / KW20 / Rd).